A 557-amino-acid polypeptide reads, in one-letter code: Dihydroxy-acid dehydratase (557 aa).

C50 contributes to the [2Fe-2S] cluster binding site. Position 82 (D82) interacts with Mg(2+). [2Fe-2S] cluster is bound at residue C123. Residues D124 and K125 each coordinate Mg(2+). K125 is modified (N6-carboxylysine). A [2Fe-2S] cluster-binding site is contributed by C195. E447 contributes to the Mg(2+) binding site. The active-site Proton acceptor is S473.

It belongs to the IlvD/Edd family. In terms of assembly, homodimer. The cofactor is [2Fe-2S] cluster. Mg(2+) serves as cofactor.

The catalysed reaction is (2R)-2,3-dihydroxy-3-methylbutanoate = 3-methyl-2-oxobutanoate + H2O. It carries out the reaction (2R,3R)-2,3-dihydroxy-3-methylpentanoate = (S)-3-methyl-2-oxopentanoate + H2O. Its pathway is amino-acid biosynthesis; L-isoleucine biosynthesis; L-isoleucine from 2-oxobutanoate: step 3/4. It functions in the pathway amino-acid biosynthesis; L-valine biosynthesis; L-valine from pyruvate: step 3/4. Functionally, functions in the biosynthesis of branched-chain amino acids. Catalyzes the dehydration of (2R,3R)-2,3-dihydroxy-3-methylpentanoate (2,3-dihydroxy-3-methylvalerate) into 2-oxo-3-methylpentanoate (2-oxo-3-methylvalerate) and of (2R)-2,3-dihydroxy-3-methylbutanoate (2,3-dihydroxyisovalerate) into 2-oxo-3-methylbutanoate (2-oxoisovalerate), the penultimate precursor to L-isoleucine and L-valine, respectively. In Nitrosomonas europaea (strain ATCC 19718 / CIP 103999 / KCTC 2705 / NBRC 14298), this protein is Dihydroxy-acid dehydratase.